The primary structure comprises 678 residues: Protein distal antenna (678 aa).

The 52-residue stretch at 7-58 folds into the HTH psq-type domain; it reads TKGKRPLRSLTPRDKIHAIQRIHDGESKASVARDIGVPESTLRGWCKNEDKL. A DNA-binding region (H-T-H motif) is located at residues 34-54; the sequence is KASVARDIGVPESTLRGWCKN. 5 disordered regions span residues 232 to 310, 344 to 381, 445 to 528, 541 to 592, and 645 to 678; these read GAGN…GGPM, GVTS…PSGS, KETE…TSEC, GMEA…DEEE, and NETP…RRRK. Polar residues-rich tracts occupy residues 241–254 and 349–363; these read PSGQ…SPRS and PIRS…QLAQ. A phosphoserine mark is found at Ser-251 and Ser-254. A compositionally biased stretch (low complexity) spans 372-381; it reads LTPSSTPSGS. The segment covering 449-461 has biased composition (polar residues); sequence TPSVRSLSSNEQN. The span at 462–478 shows a compositional bias: acidic residues; it reads PEADEATETDLDGEVEP. Positions 495–508 are enriched in polar residues; that stretch reads TPSQSPIAHSSGSR. The span at 570 to 586 shows a compositional bias: low complexity; the sequence is NNNDVSASNNNNNNNSN. The segment covering 657–667 has biased composition (acidic residues); it reads EDSEEHAAEEE.

As to quaternary structure, homomers. Interacts with itself, danr, ey and dac to form a complex (or complexes) containing the RD factors. In terms of tissue distribution, coexpressed with danr in the presumptive distal antenna, but not in the leg imaginal disk. Both proteins are also expressed in the brain and the eye region of the eye-antenna disk. First detected in early L3 eye disks in cells surrounding the newly initiated MF. Levels are uniform and high anterior to the furrow, lower levels within and posterior to the furrow. Limited expression is seen in small groups of cells in leg and wing. These appear in the location of prominent sense organ progenitors at relatively late stages of disk development.

Its subcellular location is the nucleus. In terms of biological role, probable transcription factor with a role in the retinal determination (RD) network. Regulates ato expression and is required for normal R8 induction and differentiation. Danr appears to repress Dan expression, but Dan is required for Danr expression anterior to the morphogenetic furrow (MF). Dan and Danr lie downstream of so and require dac function for highest levels of expression. Contributes to differentiation of antenna-specific characteristics; effector gene that acts downstream of homothorax (hth), Distal-less (Dll), cut (ct) and spineless (ss) genes to control differentiation of distal antennal structures. The protein is Protein distal antenna of Drosophila melanogaster (Fruit fly).